A 362-amino-acid chain; its full sequence is Methylthioribose-1-phosphate isomerase (362 aa).

Residues 53-55, arginine 90, and glutamine 201 contribute to the substrate site; that span reads RGA. The Proton donor role is filled by aspartate 241. 251-252 serves as a coordination point for substrate; the sequence is NK.

It belongs to the eIF-2B alpha/beta/delta subunits family. MtnA subfamily.

The catalysed reaction is 5-(methylsulfanyl)-alpha-D-ribose 1-phosphate = 5-(methylsulfanyl)-D-ribulose 1-phosphate. It functions in the pathway amino-acid biosynthesis; L-methionine biosynthesis via salvage pathway; L-methionine from S-methyl-5-thio-alpha-D-ribose 1-phosphate: step 1/6. Functionally, catalyzes the interconversion of methylthioribose-1-phosphate (MTR-1-P) into methylthioribulose-1-phosphate (MTRu-1-P). This chain is Methylthioribose-1-phosphate isomerase, found in Dechloromonas aromatica (strain RCB).